The chain runs to 549 residues: Glucose-6-phosphate isomerase (549 aa).

The active-site Proton donor is the glutamate 353. Active-site residues include histidine 384 and lysine 510. The segment at 523-549 is disordered; that stretch reads AEPPAAQSDSSTDALVRRYRSERGRTA. The segment covering 537–549 has biased composition (basic and acidic residues); it reads LVRRYRSERGRTA.

The protein belongs to the GPI family.

It is found in the cytoplasm. It carries out the reaction alpha-D-glucose 6-phosphate = beta-D-fructose 6-phosphate. The protein operates within carbohydrate biosynthesis; gluconeogenesis. It participates in carbohydrate degradation; glycolysis; D-glyceraldehyde 3-phosphate and glycerone phosphate from D-glucose: step 2/4. Functionally, catalyzes the reversible isomerization of glucose-6-phosphate to fructose-6-phosphate. This Mycolicibacterium gilvum (strain PYR-GCK) (Mycobacterium gilvum (strain PYR-GCK)) protein is Glucose-6-phosphate isomerase.